Reading from the N-terminus, the 393-residue chain is Lysophosphatidic acid receptor 1 (393 aa).

Over 1–50 (MAAASTSSPVVSQPQFTAMNEPQCFYNESIAFFYNRSGKYLATEWNTVSK) the chain is Extracellular. Disulfide bonds link cysteine 24/cysteine 190 and cysteine 188/cysteine 195. Asparagine 27 and asparagine 35 each carry an N-linked (GlcNAc...) asparagine glycan. Lysine 39 contributes to the a 1-acyl-sn-glycero-3-phosphate binding site. Residues 51–75 (LVMGLGITVCIFIMLANLLVMVAIY) form a helical membrane-spanning segment. The Cytoplasmic segment spans residues 76-83 (VNRRFHFP). A helical membrane pass occupies residues 84 to 107 (IYYLMANLAAADFFAGLAYFYLMF). Topologically, residues 108–121 (NTGPNTRRLTVSTW) are extracellular. Residues 122–144 (LLRQGLIDTTVTASVANLLAIAI) traverse the membrane as a helical segment. An a 1-acyl-sn-glycero-3-phosphate-binding site is contributed by 124-129 (RQGLID). The Cytoplasmic portion of the chain corresponds to 145–163 (ERHITVFRMQLHTRMSNRR). A helical membrane pass occupies residues 164–184 (VVVVIVVIWTMAIVMGAIPSV). Residues 185–204 (GWNCICDIENCSNMAPLYSD) lie on the Extracellular side of the membrane. A helical membrane pass occupies residues 205-225 (SYLVFWAIFNLVTFVVMVVLY). Tryptophan 210 is an a 1-acyl-sn-glycero-3-phosphate binding site. At 226-255 (AHIFGYVRQRTMRMSRHSSGPRRNRDTMMS) the chain is on the cytoplasmic side. The helical transmembrane segment at 256-280 (LLKTVVIVLGAFIICWTPGLVLLLL) threads the bilayer. The Extracellular portion of the chain corresponds to 281-294 (DVCCPQCDVLAYEK). Cysteine 284 and cysteine 287 are joined by a disulfide. Residues 295–315 (FFLLLAEFNSAMNPIIYSYRD) traverse the membrane as a helical segment. The Cytoplasmic portion of the chain corresponds to 316–393 (KEMSATFRQI…PPERPGQGRV (78 aa)). Phosphoserine is present on serine 341. Threonine 351 is modified (phosphothreonine). Positions 369-381 (KMRGGHHLLRDEQ) are enriched in basic and acidic residues. The interval 369–393 (KMRGGHHLLRDEQPPPPERPGQGRV) is disordered.

This sequence belongs to the G-protein coupled receptor 1 family. In terms of assembly, interacts with RALA and GRK2. Interacts with GNAQ and GNA13. Interacts with CD14; the interaction is enhanced by exposure to bacterial lipopolysaccharide (LPS). In terms of processing, N-glycosylated. In terms of tissue distribution, detected in brain cortex and in pituitary pars tuberalis.

Its subcellular location is the cell surface. The protein localises to the cell membrane. It is found in the endosome. In terms of biological role, receptor for lysophosphatidic acid (LPA). Plays a role in the reorganization of the actin cytoskeleton, cell migration, differentiation and proliferation, and thereby contributes to the responses to tissue damage and infectious agents. Activates downstream signaling cascades via the G(i)/G(o), G(12)/G(13), and G(q) families of heteromeric G proteins. Signaling inhibits adenylyl cyclase activity and decreases cellular cAMP levels. Signaling triggers an increase of cytoplasmic Ca(2+) levels. Activates RALA; this leads to the activation of phospholipase C (PLC) and the formation of inositol 1,4,5-trisphosphate. Signaling mediates activation of down-stream MAP kinases. Contributes to the regulation of cell shape. Promotes Rho-dependent reorganization of the actin cytoskeleton in neuronal cells and neurite retraction. Promotes the activation of Rho and the formation of actin stress fibers. Promotes formation of lamellipodia at the leading edge of migrating cells via activation of RAC1. Through its function as LPA receptor, plays a role in chemotaxis and cell migration, including responses to injury and wounding. Plays a role in triggering inflammation in response to bacterial lipopolysaccharide (LPS) via its interaction with CD14. Promotes cell proliferation in response to LPA. Inhibits the intracellular ciliogenesis pathway in response to LPA and through AKT1 activation. Required for normal skeleton development. May play a role in osteoblast differentiation. Required for normal brain development. Required for normal proliferation, survival and maturation of newly formed neurons in the adult dentate gyrus. Plays a role in pain perception and in the initiation of neuropathic pain. This is Lysophosphatidic acid receptor 1 (LPAR1) from Ovis aries (Sheep).